A 236-amino-acid polypeptide reads, in one-letter code: Leucyl/phenylalanyl-tRNA--protein transferase (236 aa).

The protein belongs to the L/F-transferase family.

It localises to the cytoplasm. The catalysed reaction is N-terminal L-lysyl-[protein] + L-leucyl-tRNA(Leu) = N-terminal L-leucyl-L-lysyl-[protein] + tRNA(Leu) + H(+). It carries out the reaction N-terminal L-arginyl-[protein] + L-leucyl-tRNA(Leu) = N-terminal L-leucyl-L-arginyl-[protein] + tRNA(Leu) + H(+). The enzyme catalyses L-phenylalanyl-tRNA(Phe) + an N-terminal L-alpha-aminoacyl-[protein] = an N-terminal L-phenylalanyl-L-alpha-aminoacyl-[protein] + tRNA(Phe). In terms of biological role, functions in the N-end rule pathway of protein degradation where it conjugates Leu, Phe and, less efficiently, Met from aminoacyl-tRNAs to the N-termini of proteins containing an N-terminal arginine or lysine. The chain is Leucyl/phenylalanyl-tRNA--protein transferase from Vibrio parahaemolyticus serotype O3:K6 (strain RIMD 2210633).